The chain runs to 154 residues: Large ribosomal subunit protein bL17 (154 aa).

Residues 125-154 (AASQKSSKQDRAKRVQGSKKNVDAVAESAE) form a disordered region.

Belongs to the bacterial ribosomal protein bL17 family. As to quaternary structure, part of the 50S ribosomal subunit. Contacts protein L32.

The sequence is that of Large ribosomal subunit protein bL17 from Chlorobium chlorochromatii (strain CaD3).